We begin with the raw amino-acid sequence, 154 residues long: Endoribonuclease YbeY (154 aa).

Zn(2+) contacts are provided by histidine 118, histidine 122, and histidine 128.

The protein belongs to the endoribonuclease YbeY family. It depends on Zn(2+) as a cofactor.

It localises to the cytoplasm. Its function is as follows. Single strand-specific metallo-endoribonuclease involved in late-stage 70S ribosome quality control and in maturation of the 3' terminus of the 16S rRNA. The chain is Endoribonuclease YbeY from Chloroflexus aurantiacus (strain ATCC 29366 / DSM 635 / J-10-fl).